An 82-amino-acid chain; its full sequence is MLPFVQERIGLFIVNFFIFTVVCAITLLVCMAFLTATRLCVQCMTGFNTLLVQPALYLYNTGRSVYVKFQDSKPPLPPDEWV.

The Virion surface segment spans residues methionine 1 to phenylalanine 16. A helical transmembrane segment spans residues phenylalanine 17–threonine 37. Residues arginine 38 to proline 78 are Intravirion-facing.

The protein belongs to the betacoronaviruses E protein family. As to quaternary structure, homopentamer. Interacts with membrane protein M in the budding compartment of the host cell, which is located between endoplasmic reticulum and the Golgi complex. Interacts with Nucleoprotein.

It localises to the host Golgi apparatus membrane. Its function is as follows. Plays a central role in virus morphogenesis and assembly. Acts as a viroporin and self-assembles in host membranes forming pentameric protein-lipid pores that allow ion transport. Also plays a role in the induction of apoptosis. This is Envelope small membrane protein from Middle East respiratory syndrome-related coronavirus (isolate United Kingdom/H123990006/2012) (MERS-CoV).